Reading from the N-terminus, the 711-residue chain is Polyribonucleotide nucleotidyltransferase (711 aa).

Positions 486 and 492 each coordinate Mg(2+). Residues 553–612 form the KH domain; that stretch reads PRIHTIKINPDKIKDVIGKGGSVIRALTEETGTTIEIEDDGTVKIAATDGEKAKHAIRRI. The 69-residue stretch at 622–690 folds into the S1 motif domain; it reads GRVYNGKVTR…RQGRIRLSIK (69 aa). Residues 690–711 are disordered; sequence KEATEQSQPAAALEAPAAEQGE. A compositionally biased stretch (low complexity) spans 698–711; it reads PAAALEAPAAEQGE.

It belongs to the polyribonucleotide nucleotidyltransferase family. In terms of assembly, component of the RNA degradosome, which is a multiprotein complex involved in RNA processing and mRNA degradation. Mg(2+) is required as a cofactor.

The protein resides in the cytoplasm. It catalyses the reaction RNA(n+1) + phosphate = RNA(n) + a ribonucleoside 5'-diphosphate. Involved in mRNA degradation. Catalyzes the phosphorolysis of single-stranded polyribonucleotides processively in the 3'- to 5'-direction. The polypeptide is Polyribonucleotide nucleotidyltransferase (Escherichia coli O127:H6 (strain E2348/69 / EPEC)).